The sequence spans 155 residues: Pathogenesis-related protein A (155 aa).

This sequence belongs to the BetVI family.

This chain is Pathogenesis-related protein A (PCPR1-1), found in Petroselinum crispum (Parsley).